Reading from the N-terminus, the 690-residue chain is Signal peptide peptidase-like 2C (690 aa).

A signal peptide spans 1–28; the sequence is MACLGSLHPLGSLLLLFLLLLLSPEARG. Residues 29-192 are Lumenal-facing; the sequence is EYGLVRVVSK…APLEPVTDYN (164 aa). Positions 87–166 constitute a PA domain; it reads DSSPRQRPLH…AVLRYTDMLD (80 aa). Residue asparagine 106 is glycosylated (N-linked (GlcNAc...) asparagine). A helical membrane pass occupies residues 193 to 213; that stretch reads MAIIFILAVGTVAAGGYWAGL. Residues 214–260 are Cytoplasmic-facing; that stretch reads MEANKLQRRQAQRGGGLGGHNQQQTVAAERSQRAWEDDDFEDAPMDF. Residues 261–283 traverse the membrane as a helical segment; the sequence is TPAMTGAVVTMSCSIMILLYFFY. Position 284 (aspartate 284) is a topological domain, lumenal. The chain crosses the membrane as a helical span at residues 285 to 307; sequence CFVYVMIGIFSLGASTGLYSCLA. At 308 to 328 the chain is on the cytoplasmic side; it reads PILCHLPLWRYQWVLPGQRVS. Residues 329–349 form a helical membrane-spanning segment; that stretch reads VTWPLLLLAGLCAMVTVLWVI. The Lumenal portion of the chain corresponds to 350 to 354; that stretch reads HRNED. Residues 355-373 traverse the membrane as a helical segment; the sequence is HWAWLLQDTLGVAYCLFVL. The Cytoplasmic portion of the chain corresponds to 374–384; that stretch reads RRVRLPTFKNC. The chain crosses the membrane as a helical span at residues 385–405; that stretch reads TLFLLALLAFDVFFVFITPLF. Aspartate 395 is a catalytic residue. At 406 to 448 the chain is on the lumenal side; sequence TKTGESIMVEVASGPADSSSHERLPMVLKVPRLSFSALTLCNQ. A helical transmembrane segment spans residues 449-469; sequence PFSILGFGDIVVPGFLVAYCH. The active site involves aspartate 457. At 470–482 the chain is on the cytoplasmic side; the sequence is RFDMQVQSRQVYY. The helical transmembrane segment at 483 to 503 threads the bilayer; sequence MACTVAYAVGLLVTFVAMILM. Residue glutamine 504 is a topological domain, lumenal. Residues 505-525 form a helical membrane-spanning segment; the sequence is MGQPALLYLVSSTLLTSLAVA. The PAL motif lies at 508–510; the sequence is PAL. Residues 526–690 are Cytoplasmic-facing; sequence TCRQEFTLFW…KKSMSAQAPL (165 aa). Positions 564–573 are enriched in basic and acidic residues; it reads EDAKDSRTTN. Residues 564–633 form a disordered region; sequence EDAKDSRTTN…DPNELPSGSP (70 aa). Over residues 615–624 the composition is skewed to polar residues; that stretch reads SEGWSDTNLD.

This sequence belongs to the peptidase A22B family. In terms of assembly, interacts (via active sites) with FREY; the interaction stabilizes FREY1 protein and inhibits SPPL2C proteolytic activity. Post-translationally, glycosylated. In terms of tissue distribution, highly expressed in testis where it is primarily localised in spermatids (at protein level).

The protein localises to the endoplasmic reticulum membrane. Functionally, sperm-specific intramembrane-cleaving aspartic protease (I-CLiP) that cleaves distinct tail-anchored proteins and SNARE proteins. In elongated spermatids, modulates intracellular Ca(2+) homeostasis by controlling PLN abundance through proteolytic cleavage. During spermatogenesis, processes SNARE proteins and impacts vesicular trafficking which supports compartmental reorganization in maturating spermatids and may play a role in formation of the acrosome. Its function is as follows. In round spermatids, acts as a scaffold protein supporting FREY1 in IZUMO1 recruitment at the endoplasmic reticulum membrane and coordination of IZUMO1 complex assembly. Stabilizes FREY1 at the endoplasmic reticulum membrane through interaction. May recruit IZUMO1 interaction partners. In terms of biological role, no difference in cleavage specificity compared to isoform 1. This chain is Signal peptide peptidase-like 2C, found in Mus musculus (Mouse).